A 1124-amino-acid chain; its full sequence is Tyrosine-protein kinase JAK3 (1124 aa).

The interval 1–223 (MAPPSEETPL…RRTVRRALRR (223 aa)) is interaction with cytokine/interferon/growth hormone receptors. Position 17 is a phosphoserine (Ser-17). The FERM domain occupies 24–356 (GALHVLLPAR…GYFRLTTDSQ (333 aa)). Residues 375–475 (QCHGPITLDF…GVAVTLTSCC (101 aa)) enclose the SH2; atypical domain. In terms of domain architecture, Protein kinase 1 spans 521–781 (LEWHENLGHG…AVIRDLNSLI (261 aa)). Residue Tyr-785 is modified to Phosphotyrosine; by autocatalysis. Residues 822–1111 (LKYISQLGKG…SRGCETHAFT (290 aa)) form the Protein kinase 2 domain. ATP is bound by residues 828–836 (LGKGNFGSV) and Lys-855. A phosphotyrosine mark is found at Tyr-904 and Tyr-939. Asp-949 serves as the catalytic Proton acceptor. 2 positions are modified to phosphotyrosine; by autocatalysis: Tyr-980 and Tyr-981.

It belongs to the protein kinase superfamily. Tyr protein kinase family. JAK subfamily. As to quaternary structure, interacts with STAM2 and MYO18A. Interacts with SHB. Interacts with CD69. Post-translationally, tyrosine phosphorylated in response to IL-2 and IL-4. Dephosphorylation of Tyr-980 and Tyr-981 by PTPN2 negatively regulates cytokine-mediated signaling. In terms of tissue distribution, in NK cells and an NK-like cell line but not in resting T-cells or in other tissues. The S-form is more commonly seen in hematopoietic lines, whereas the B-form is detected in cells both of hematopoietic and epithelial origins.

The protein resides in the endomembrane system. It is found in the cytoplasm. The enzyme catalyses L-tyrosyl-[protein] + ATP = O-phospho-L-tyrosyl-[protein] + ADP + H(+). Its function is as follows. Non-receptor tyrosine kinase involved in various processes such as cell growth, development, or differentiation. Mediates essential signaling events in both innate and adaptive immunity and plays a crucial role in hematopoiesis during T-cells development. In the cytoplasm, plays a pivotal role in signal transduction via its association with type I receptors sharing the common subunit gamma such as IL2R, IL4R, IL7R, IL9R, IL15R and IL21R. Following ligand binding to cell surface receptors, phosphorylates specific tyrosine residues on the cytoplasmic tails of the receptor, creating docking sites for STATs proteins. Subsequently, phosphorylates the STATs proteins once they are recruited to the receptor. Phosphorylated STATs then form homodimer or heterodimers and translocate to the nucleus to activate gene transcription. For example, upon IL2R activation by IL2, JAK1 and JAK3 molecules bind to IL2R beta (IL2RB) and gamma chain (IL2RG) subunits inducing the tyrosine phosphorylation of both receptor subunits on their cytoplasmic domain. Then, STAT5A and STAT5B are recruited, phosphorylated and activated by JAK1 and JAK3. Once activated, dimerized STAT5 translocates to the nucleus and promotes the transcription of specific target genes in a cytokine-specific fashion. The protein is Tyrosine-protein kinase JAK3 of Homo sapiens (Human).